A 252-amino-acid polypeptide reads, in one-letter code: MTQVLLNPSLEEAYHFLVKNMYNNLITLFGDCEIQYEGRAYSHASLASRLIIIKVDGSVIVHEHTKREPINWQPPGSVIVVRKESGVLSIESIRKRPKERLYIILRRLYYLTSAEVNSGNFDIKGTEKDIVDLVLENPNLIEEGFKPIQREYRIPYGIVDLFGYDKFGTPFVLEFKRSKATLQAVSQLHRYYMFFLESYGKARGALVSPGISEKALNLIEKLRLEYIDANRIFDSITNSSRYTINISNIQRS.

Belongs to the NucS endonuclease family.

It localises to the cytoplasm. In terms of biological role, cleaves both 3' and 5' ssDNA extremities of branched DNA structures. The chain is Endonuclease NucS from Sulfurisphaera tokodaii (strain DSM 16993 / JCM 10545 / NBRC 100140 / 7) (Sulfolobus tokodaii).